We begin with the raw amino-acid sequence, 122 residues long: Ig heavy chain V region M603 (122 aa).

The Ig-like domain occupies 1-121; sequence EVKLVESGGG…WGAGTTVTVS (121 aa).

The sequence is that of Ig heavy chain V region M603 from Mus musculus (Mouse).